A 1105-amino-acid chain; its full sequence is AP-3 complex subunit beta-1 (1105 aa).

Disordered stretches follow at residues 1–26 (MSSN…EATS) and 271–292 (KNFY…KKSY). A phosphoserine mark is found at S276 and S610. The interval 668 to 824 (KKEKPMKKFY…KPQQERHPPS (157 aa)) is disordered. Residues 679-704 (ESEEEEDEDEDEDEEEEEKEDEDENP) are compositionally biased toward acidic residues. 2 stretches are compositionally biased toward low complexity: residues 705–722 (SDSS…SGDT) and 730–741 (DSSSGQDSETGS). Over residues 750–759 (VAKRNSKTKR) the composition is skewed to basic residues. Positions 760-774 (KSDSENREKKNENSK) are enriched in basic and acidic residues. Phosphoserine is present on residues S761 and S763. The segment covering 775 to 788 (ASESSSEESSSMED) has biased composition (low complexity). Positions 789–799 (SSSESESESGS) are enriched in acidic residues. Over residues 811 to 824 (AKERKPQQERHPPS) the composition is skewed to basic and acidic residues.

It belongs to the adaptor complexes large subunit family. In terms of assembly, adaptor protein complex 3 (AP-3) is a heterotetramer composed of two large adaptins (delta-type subunit AP3D1 and beta-type subunit AP3B1 or AP3B2), a medium adaptin (mu-type subunit AP3M1 or AP3M2) and a small adaptin (sigma-type subunit APS1 or AP3S2). AP-3 associates with the BLOC-1 complex. Interacts with KIF3A; interaction is direct; interaction is impaired by pyrophosphorylation of AP3B1. Post-translationally, phosphorylated on serine residues. In terms of processing, pyrophosphorylated by 5-diphosphoinositol pentakisphosphate (5-IP7). Pyrophosphorylation impairs interaction with KIF3A. Serine pyrophosphorylation is achieved by Mg(2+)-dependent, but enzyme independent transfer of a beta-phosphate from a inositol pyrophosphate to a pre-phosphorylated serine residue. Ubiquitously expressed.

The protein resides in the cytoplasmic vesicle. Its subcellular location is the clathrin-coated vesicle membrane. It localises to the golgi apparatus. In terms of biological role, subunit of non-clathrin- and clathrin-associated adaptor protein complex 3 (AP-3) that plays a role in protein sorting in the late-Golgi/trans-Golgi network (TGN) and/or endosomes. The AP complexes mediate both the recruitment of clathrin to membranes and the recognition of sorting signals within the cytosolic tails of transmembrane cargo molecules. AP-3 appears to be involved in the sorting of a subset of transmembrane proteins targeted to lysosomes and lysosome-related organelles. In concert with the BLOC-1 complex, AP-3 is required to target cargos into vesicles assembled at cell bodies for delivery into neurites and nerve terminals. The polypeptide is AP-3 complex subunit beta-1 (Ap3b1) (Mus musculus (Mouse)).